Consider the following 87-residue polypeptide: DNA-directed RNA polymerase subunit omega (87 aa).

Belongs to the RNA polymerase subunit omega family. In terms of assembly, the RNAP catalytic core consists of 2 alpha, 1 beta, 1 beta' and 1 omega subunit. When a sigma factor is associated with the core the holoenzyme is formed, which can initiate transcription.

It carries out the reaction RNA(n) + a ribonucleoside 5'-triphosphate = RNA(n+1) + diphosphate. In terms of biological role, promotes RNA polymerase assembly. Latches the N- and C-terminal regions of the beta' subunit thereby facilitating its interaction with the beta and alpha subunits. This is DNA-directed RNA polymerase subunit omega from Pseudomonas entomophila (strain L48).